Here is a 244-residue protein sequence, read N- to C-terminus: MTTLVLLRHGESNWNRENLFTGWVDVDLSEKGLKEATRGGELLAEAGVLPDVVHTSLLTRAIRTAWLALDAAGRTWVPVRRSWRLNERHYGGLQGLNKAETLEKFGEEQFQLWRRSYDTPPPEIGPEQVSGVDERYADLAPDLIPRTECLADVVARMLPYWYDAIVPDLRAGRTVLVAAHGNSLRALVKHLDHISDTDIAGLNIPTGIPLRYELDDDLGVLSSGYLDPDAAASAAAAVAAQGKK.

Residues 8 to 15 (RHGESNWN), 21 to 22 (TG), arginine 60, 87 to 90 (ERHY), lysine 98, 114 to 115 (RR), and 181 to 182 (GN) each bind substrate. Residue histidine 9 is the Tele-phosphohistidine intermediate of the active site. Catalysis depends on glutamate 87, which acts as the Proton donor/acceptor.

Belongs to the phosphoglycerate mutase family. BPG-dependent PGAM subfamily.

The enzyme catalyses (2R)-2-phosphoglycerate = (2R)-3-phosphoglycerate. It participates in carbohydrate degradation; glycolysis; pyruvate from D-glyceraldehyde 3-phosphate: step 3/5. Its function is as follows. Catalyzes the interconversion of 2-phosphoglycerate and 3-phosphoglycerate. The protein is 2,3-bisphosphoglycerate-dependent phosphoglycerate mutase of Frankia alni (strain DSM 45986 / CECT 9034 / ACN14a).